Reading from the N-terminus, the 64-residue chain is MAQEQTQRAGGGEDDETTGGDGSAGQERREKLAAETDDLLDEIDDVLEENAEDFVRAYVQKGGQ.

A disordered region spans residues 1 to 37; that stretch reads MAQEQTQRAGGGEDDETTGGDGSAGQERREKLAAETD. An ARC ATPase binding region spans residues 21 to 58; the sequence is DGSAGQERREKLAAETDDLLDEIDDVLEENAEDFVRAY. Positions 24 to 52 form a coiled coil; that stretch reads AGQERREKLAAETDDLLDEIDDVLEENAE. Gln-64 carries the post-translational modification Deamidated glutamine. Residue Gln-64 forms an Isoglutamyl lysine isopeptide (Gln-Lys) (interchain with K-? in acceptor proteins) linkage.

Belongs to the prokaryotic ubiquitin-like protein family. As to quaternary structure, strongly interacts with the proteasome-associated ATPase ARC through a hydrophobic interface; the interacting region of Pup lies in its C-terminal half. There is one Pup binding site per ARC hexamer ring. In terms of processing, is modified by deamidation of its C-terminal glutamine to glutamate by the deamidase Dop, a prerequisite to the subsequent pupylation process.

It functions in the pathway protein degradation; proteasomal Pup-dependent pathway. Protein modifier that is covalently attached to lysine residues of substrate proteins, thereby targeting them for proteasomal degradation. The tagging system is termed pupylation. The chain is Prokaryotic ubiquitin-like protein Pup from Rhodococcus erythropolis (strain PR4 / NBRC 100887).